Here is a 228-residue protein sequence, read N- to C-terminus: 7-cyano-7-deazaguanine synthase (228 aa).

Position 11 to 21 (11 to 21) interacts with ATP; sequence LSGGLDSATVL. Cys-191, Cys-201, Cys-204, and Cys-207 together coordinate Zn(2+).

Belongs to the QueC family. Requires Zn(2+) as cofactor.

The enzyme catalyses 7-carboxy-7-deazaguanine + NH4(+) + ATP = 7-cyano-7-deazaguanine + ADP + phosphate + H2O + H(+). It participates in purine metabolism; 7-cyano-7-deazaguanine biosynthesis. Catalyzes the ATP-dependent conversion of 7-carboxy-7-deazaguanine (CDG) to 7-cyano-7-deazaguanine (preQ(0)). The sequence is that of 7-cyano-7-deazaguanine synthase from Magnetococcus marinus (strain ATCC BAA-1437 / JCM 17883 / MC-1).